Reading from the N-terminus, the 601-residue chain is Deuterosome assembly protein 1 (601 aa).

3 coiled-coil regions span residues 14–59, 86–196, and 226–277; these read CEAE…NAQT, TQNY…GKKQ, and IEKL…ELQS. The segment at 305–329 is disordered; the sequence is AQDNRKRVESSYSPSPKEAERKRKE. Residues 354–397 are a coiled coil; sequence EEGLCSEQERLRSEISELTQELHQKEVTIATVMKKAALLERQLK. The residue at position 544 (Ser544) is a Phosphoserine. Residues 555–586 adopt a coiled-coil conformation; sequence AAQHFLMEEERRAKELEKLLNTHIDELQRHTE.

It belongs to the CEP63 family. As to quaternary structure, interacts with CEP152; the interaction is mutually exclusive with CEP63. As to expression, highly enriched in multicilia-abundant tissues (trachea and oviduct).

Its subcellular location is the cytoplasm. In terms of biological role, key structural component of the deuterosome, a structure that promotes de novo centriole amplification in multiciliated cells. Deuterosome-mediated centriole amplification occurs in terminally differentiated multiciliated cells and can generate more than 100 centrioles. Probably sufficient for the specification and formation of the deuterosome inner core. Interacts with CEP152 and recruits PLK4 to activate centriole biogenesis. This Mus musculus (Mouse) protein is Deuterosome assembly protein 1.